The primary structure comprises 190 residues: CASP-like protein 5A3 (190 aa).

Composition is skewed to low complexity over residues 1–12 (MRASRPAVHPVE) and 20–31 (AAAEGPEAQVEG). The disordered stretch occupies residues 1–31 (MRASRPAVHPVEAAPPPPAAAAEGPEAQVEG). Over 1 to 50 (MRASRPAVHPVEAAPPPPAAAAEGPEAQVEGAAHPRGVRMKDPPGAPGTP) the chain is Cytoplasmic. The chain crosses the membrane as a helical span at residues 51–71 (AGLGLRLAQAFFAAAALAVMA). Topologically, residues 72-81 (STNDFPSVSA) are extracellular. A helical membrane pass occupies residues 82-102 (FSYLVAAAILQCLWSLLLAFV). The Cytoplasmic segment spans residues 103–126 (DIYALLVKRSLRNARAVCIFTIGD). The chain crosses the membrane as a helical span at residues 127–147 (GITGTITLGAACASAGITVLI). The Extracellular segment spans residues 148–164 (GNDLNICAENHCASFET). Residues 165–185 (ATALAFISWFALAPSCILNFW) traverse the membrane as a helical segment. At 186 to 190 (SMASR) the chain is on the cytoplasmic side.

It belongs to the Casparian strip membrane proteins (CASP) family. As to quaternary structure, homodimer and heterodimers.

It is found in the cell membrane. The polypeptide is CASP-like protein 5A3 (Zea mays (Maize)).